Consider the following 151-residue polypeptide: Ribosome maturation factor RimP (151 aa).

Belongs to the RimP family.

It localises to the cytoplasm. Required for maturation of 30S ribosomal subunits. The sequence is that of Ribosome maturation factor RimP from Shewanella denitrificans (strain OS217 / ATCC BAA-1090 / DSM 15013).